Reading from the N-terminus, the 337-residue chain is Ketol-acid reductoisomerase (NADP(+)) (337 aa).

A KARI N-terminal Rossmann domain is found at 3–183; sequence VEMFYDADAD…GGARAGVIKT (181 aa). NADP(+)-binding positions include 26 to 29, Lys49, Ser52, Ser54, and 84 to 87; these read YGSQ and DTAQ. His109 is a catalytic residue. NADP(+) is bound at residue Gly135. A KARI C-terminal knotted domain is found at 184-329; it reads TFKEETETDL…KKLRDLMSWV (146 aa). Asp192, Glu196, Glu228, and Glu232 together coordinate Mg(2+). Ser253 contacts substrate.

It belongs to the ketol-acid reductoisomerase family. Requires Mg(2+) as cofactor.

It carries out the reaction (2R)-2,3-dihydroxy-3-methylbutanoate + NADP(+) = (2S)-2-acetolactate + NADPH + H(+). The enzyme catalyses (2R,3R)-2,3-dihydroxy-3-methylpentanoate + NADP(+) = (S)-2-ethyl-2-hydroxy-3-oxobutanoate + NADPH + H(+). It functions in the pathway amino-acid biosynthesis; L-isoleucine biosynthesis; L-isoleucine from 2-oxobutanoate: step 2/4. It participates in amino-acid biosynthesis; L-valine biosynthesis; L-valine from pyruvate: step 2/4. Involved in the biosynthesis of branched-chain amino acids (BCAA). Catalyzes an alkyl-migration followed by a ketol-acid reduction of (S)-2-acetolactate (S2AL) to yield (R)-2,3-dihydroxy-isovalerate. In the isomerase reaction, S2AL is rearranged via a Mg-dependent methyl migration to produce 3-hydroxy-3-methyl-2-ketobutyrate (HMKB). In the reductase reaction, this 2-ketoacid undergoes a metal-dependent reduction by NADPH to yield (R)-2,3-dihydroxy-isovalerate. This is Ketol-acid reductoisomerase (NADP(+)) from Mycolicibacterium vanbaalenii (strain DSM 7251 / JCM 13017 / BCRC 16820 / KCTC 9966 / NRRL B-24157 / PYR-1) (Mycobacterium vanbaalenii).